Here is a 515-residue protein sequence, read N- to C-terminus: 3-[(3aS,4S,7aS)-7a-methyl-1,5-dioxo-octahydro-1H-inden-4-yl]propanoyl:CoA ligase (515 aa).

Residues 185–193 (TSGTTGRSK), Asp398, Arg413, and Lys504 contribute to the ATP site.

The protein belongs to the ATP-dependent AMP-binding enzyme family.

The catalysed reaction is 3-[(3aS,4S,7aS)-7a-methyl-1,5-dioxo-octahydro-1H-inden-4-yl]propanoate + ATP + CoA = 3-[(3aS,4S,7aS)-7a-methyl-1,5-dioxo-octahydro-1H-inden-4-yl]propanoyl-CoA + AMP + diphosphate. In terms of biological role, involved in the catabolism of the rings C and D of cholesterol. Catalyzes the ATP-dependent CoA thioesterification of 3aalpha-H-4alpha(3'-propanoate)-7abeta-methylhexahydro-1,5-indanedione (HIP). In Rhodococcus jostii (strain RHA1), this protein is 3-[(3aS,4S,7aS)-7a-methyl-1,5-dioxo-octahydro-1H-inden-4-yl]propanoyl:CoA ligase.